We begin with the raw amino-acid sequence, 445 residues long: Putative ATP-dependent RNA helicase L538 (445 aa).

The 138-residue stretch at isoleucine 14 to glutamate 151 folds into the Helicase ATP-binding domain. Histidine 27–threonine 34 contributes to the ATP binding site. Positions aspartate 101–histidine 104 match the DEAH box motif. In terms of domain architecture, Helicase C-terminal spans lysine 273 to tyrosine 442.

It belongs to the DEAD box helicase family. DEAH subfamily.

The protein localises to the virion. The enzyme catalyses ATP + H2O = ADP + phosphate + H(+). This chain is Putative ATP-dependent RNA helicase L538, found in Acanthamoeba polyphaga mimivirus (APMV).